Consider the following 445-residue polypeptide: Glycine--tRNA ligase (445 aa).

Lys97 and Glu145 together coordinate substrate. ATP-binding positions include 177 to 179, 187 to 192, 262 to 263, and 308 to 311; these read RNE, FRTCEF, EI, and GLTR. 192-196 is a binding site for substrate; it reads FEQME. 304–308 contributes to the substrate binding site; that stretch reads ETSLG.

This sequence belongs to the class-II aminoacyl-tRNA synthetase family. As to quaternary structure, homodimer.

The protein localises to the cytoplasm. The enzyme catalyses tRNA(Gly) + glycine + ATP = glycyl-tRNA(Gly) + AMP + diphosphate. Catalyzes the attachment of glycine to tRNA(Gly). The polypeptide is Glycine--tRNA ligase (Borrelia hermsii (strain HS1 / DAH)).